We begin with the raw amino-acid sequence, 712 residues long: Ribosomal RNA large subunit methyltransferase K/L (712 aa).

The THUMP domain maps to 46–157 (GAYQALLHSR…RENMVVSLDL (112 aa)).

It belongs to the methyltransferase superfamily. RlmKL family.

The protein localises to the cytoplasm. The catalysed reaction is guanosine(2445) in 23S rRNA + S-adenosyl-L-methionine = N(2)-methylguanosine(2445) in 23S rRNA + S-adenosyl-L-homocysteine + H(+). It carries out the reaction guanosine(2069) in 23S rRNA + S-adenosyl-L-methionine = N(2)-methylguanosine(2069) in 23S rRNA + S-adenosyl-L-homocysteine + H(+). Functionally, specifically methylates the guanine in position 2445 (m2G2445) and the guanine in position 2069 (m7G2069) of 23S rRNA. This is Ribosomal RNA large subunit methyltransferase K/L from Actinobacillus pleuropneumoniae serotype 3 (strain JL03).